Consider the following 354-residue polypeptide: Phosphate acyltransferase (354 aa).

This sequence belongs to the PlsX family. In terms of assembly, homodimer. Probably interacts with PlsY.

The protein resides in the cytoplasm. It carries out the reaction a fatty acyl-[ACP] + phosphate = an acyl phosphate + holo-[ACP]. The protein operates within lipid metabolism; phospholipid metabolism. Functionally, catalyzes the reversible formation of acyl-phosphate (acyl-PO(4)) from acyl-[acyl-carrier-protein] (acyl-ACP). This enzyme utilizes acyl-ACP as fatty acyl donor, but not acyl-CoA. This Bordetella petrii (strain ATCC BAA-461 / DSM 12804 / CCUG 43448) protein is Phosphate acyltransferase.